Consider the following 718-residue polypeptide: MTQAHSKSCFHQFWDGLQIKRSSDSFTVELLPSLGATINHSNKLQKFIISPYDPRYRSWELFLIVLVVYSAWICPFELAFLRDLPSKLLLVENIVDIFFAIDIVLTFFVAYVDSKTHLLVDDRKRIAMRYLSTWFIFDVCSTAPFQPIILLFTHKGNDIAFKVLNLLRLWRLHRVSSLFARLEKDIRFNYFWTRCSKLISVTLFAVHCAGCFNYMIADRYPNPEKTWIGAVMSTFRSESLWTRYITALYWSITTLTTTGYGDLHAENPTEMLFDIVYMMFNLGLTAYLIGNMTNLVVHGTSRTRKFRDSIQAASEFAARNQLPENIKQQVLSHFCLQFKTEGLNQQVMLDCLPKGIRSSIAYSLFFPIIRQAYLFNGVSGNFIAELVMEVQAEYFPPKEDIILQNEGEADVYIVVSGAVNIITTIHGNEQVYEKIAEGEMFGEVGSLCNIPQPFTCRTAELSQLLRISKTRLREIIEENREDSNILMNNLVQKLKLRESLPDMNQPDRRFLSKYELFHVPREAWLLKKSQLHYTEHTSRDSSNNTPVFGGDRYSRQLLGEATRSSASENENSSMTDKEENHDEVHTNCEIKKRTEEHCIQINSEDSSSTYSQRTMNATVQTGSPHKTEENITRRIPDEYYIKEANKRVTIHKYRHNSTVSAAQNGKLIKLPTSLEELFKIGSQKFQGFHPRKVVSRDYAEIDDVSVIRDGDHLFLLEM.

Residues 1–60 (MTQAHSKSCFHQFWDGLQIKRSSDSFTVELLPSLGATINHSNKLQKFIISPYDPRYRSWE) are Cytoplasmic-facing. Residues 61-81 (LFLIVLVVYSAWICPFELAFL) form a helical membrane-spanning segment. Residues 82–88 (RDLPSKL) lie on the Extracellular side of the membrane. Residues 89 to 109 (LLVENIVDIFFAIDIVLTFFV) traverse the membrane as a helical segment. Residues 110–132 (AYVDSKTHLLVDDRKRIAMRYLS) are Cytoplasmic-facing. The chain crosses the membrane as a helical span at residues 133-153 (TWFIFDVCSTAPFQPIILLFT). The Extracellular segment spans residues 154 to 162 (HKGNDIAFK). The helical; Voltage-sensor transmembrane segment at 163–183 (VLNLLRLWRLHRVSSLFARLE) threads the bilayer. Residues 184-197 (KDIRFNYFWTRCSK) lie on the Cytoplasmic side of the membrane. A helical membrane pass occupies residues 198–218 (LISVTLFAVHCAGCFNYMIAD). Topologically, residues 219–245 (RYPNPEKTWIGAVMSTFRSESLWTRYI) are extracellular. The segment at residues 246–265 (TALYWSITTLTTTGYGDLHA) is an intramembrane region (pore-forming). Over 266 to 269 (ENPT) the chain is Extracellular. A helical transmembrane segment spans residues 270 to 290 (EMLFDIVYMMFNLGLTAYLIG). Residues 291-718 (NMTNLVVHGT…DGDHLFLLEM (428 aa)) lie on the Cytoplasmic side of the membrane. Residue 374-493 (LFNGVSGNFI…NILMNNLVQK (120 aa)) participates in a nucleoside 3',5'-cyclic phosphate binding. The interval 560–584 (EATRSSASENENSSMTDKEENHDEV) is disordered. Positions 562 to 574 (TRSSASENENSSM) are enriched in polar residues. Over residues 575-584 (TDKEENHDEV) the composition is skewed to basic and acidic residues. One can recognise a KHA domain in the interval 647–718 (RVTIHKYRHN…DGDHLFLLEM (72 aa)).

This sequence belongs to the potassium channel family. Plant (TC 1.A.1.4) subfamily.

It is found in the membrane. Probable inward-rectifying potassium channel. Assuming opened or closed conformations in response to the voltage difference across the membrane, the channel is activated by hyperpolarization. The chain is Potassium channel KAT1 from Oryza sativa subsp. japonica (Rice).